Reading from the N-terminus, the 548-residue chain is 5-epi-aristolochene synthase 1 (548 aa).

Asp301, Asp305, Asp444, Thr448, and Glu452 together coordinate Mg(2+). The short motif at 301–305 (DDTFD) is the DDXXD motif element.

It belongs to the terpene synthase family. In terms of assembly, monomer. Mg(2+) is required as a cofactor. As to expression, expressed in roots, but not in shoots.

It is found in the cytoplasm. The enzyme catalyses (2E,6E)-farnesyl diphosphate = (+)-5-epi-aristolochene + diphosphate. It functions in the pathway secondary metabolite biosynthesis; terpenoid biosynthesis. Functionally, catalyzes the cyclization of trans,trans-farnesyl diphosphate (FPP) to the bicyclic intermediate 5-epi-aristolochene, initial step in the conversion of FPP to the sesquiterpenoid antifungal phytoalexin capsidiol. Produces germacrene A as an enzyme-bound intermediate that is not released by the enzyme, but is further cyclized to produce the bicyclic 5-epi-aristolochene. The protein is 5-epi-aristolochene synthase 1 (EAS) of Nicotiana attenuata (Coyote tobacco).